The following is a 952-amino-acid chain: Protein translocase subunit SecA (952 aa).

ATP-binding positions include Q104, 122–126, and D512; that span reads GEGKT.

The protein belongs to the SecA family. In terms of assembly, monomer and homodimer. Part of the essential Sec protein translocation apparatus which comprises SecA, SecYEG and auxiliary proteins SecDF. Other proteins may also be involved.

The protein localises to the cell inner membrane. It is found in the cytoplasm. It carries out the reaction ATP + H2O + cellular proteinSide 1 = ADP + phosphate + cellular proteinSide 2.. In terms of biological role, part of the Sec protein translocase complex. Interacts with the SecYEG preprotein conducting channel. Has a central role in coupling the hydrolysis of ATP to the transfer of proteins into and across the cell membrane, serving as an ATP-driven molecular motor driving the stepwise translocation of polypeptide chains across the membrane. In Gloeobacter violaceus (strain ATCC 29082 / PCC 7421), this protein is Protein translocase subunit SecA.